We begin with the raw amino-acid sequence, 131 residues long: Translation initiation factor 5A (131 aa).

Lysine 36 carries the post-translational modification Hypusine.

This sequence belongs to the eIF-5A family.

Its subcellular location is the cytoplasm. Its function is as follows. Functions by promoting the formation of the first peptide bond. This chain is Translation initiation factor 5A, found in Sulfurisphaera tokodaii (strain DSM 16993 / JCM 10545 / NBRC 100140 / 7) (Sulfolobus tokodaii).